The sequence spans 306 residues: Pantothenate kinase (306 aa).

ATP is bound at residue 91–98; it reads GSVAVGKS.

Belongs to the prokaryotic pantothenate kinase family.

It is found in the cytoplasm. It carries out the reaction (R)-pantothenate + ATP = (R)-4'-phosphopantothenate + ADP + H(+). The protein operates within cofactor biosynthesis; coenzyme A biosynthesis; CoA from (R)-pantothenate: step 1/5. The chain is Pantothenate kinase (coaA) from Streptococcus pyogenes serotype M18 (strain MGAS8232).